Consider the following 104-residue polypeptide: Small ubiquitin-related modifier 3 (104 aa).

Glycyl lysine isopeptide (Lys-Gly) (interchain with G-Cter in SUMO2) cross-links involve residues K5 and K7. K11 participates in a covalent cross-link: Glycyl lysine isopeptide (Lys-Gly) (interchain with G-Cter in SUMO); alternate. Residue K11 forms a Glycyl lysine isopeptide (Lys-Gly) (interchain with G-Cter in SUMO2); alternate linkage. Residues 15–92 (DHINLKVAGQ…IDVFQQQTGG (78 aa)) form the Ubiquitin-like domain. Residue G92 forms a Glycyl lysine isopeptide (Gly-Lys) (interchain with K-? in acceptor proteins) linkage. Positions 93 to 104 (SRVASCLLGSGL) are excised as a propeptide.

It belongs to the ubiquitin family. SUMO subfamily. Interacts with SAE2 and UBE2I. Covalently attached to a number of proteins. Interacts with USP25 (via ts SIM domain); the interaction sumoylates USP25 and inhibits its ubiquitin hydrolyzing activity. Interacts with BMAL1. Polymeric chains can be formed through Lys-11 cross-linking. Post-translationally, cleavage of precursor form by SENP1, SENP2 or SENP5 is necessary for function.

The protein localises to the cytoplasm. Its subcellular location is the nucleus. The protein resides in the PML body. Ubiquitin-like protein which can be covalently attached to target lysines either as a monomer or as a lysine-linked polymer. Does not seem to be involved in protein degradation and may function as an antagonist of ubiquitin in the degradation process. Plays a role in a number of cellular processes such as nuclear transport, DNA replication and repair, mitosis and signal transduction. Covalent attachment to its substrates requires prior activation by the E1 complex SAE1-SAE2 and linkage to the E2 enzyme UBE2I, and can be promoted by an E3 ligase such as PIAS1-4, RANBP2 or CBX4. Plays a role in the regulation of sumoylation status of SETX. This Bos taurus (Bovine) protein is Small ubiquitin-related modifier 3 (SUMO3).